Consider the following 648-residue polypeptide: Copper methylamine oxidase (648 aa).

Residues 1–9 constitute a propeptide that is removed on maturation; the sequence is MTLNAESEA. 299 to 310 contributes to the substrate binding site; it reads AFDSGEYNIGNM. The active-site Proton acceptor is Asp301. A disulfide bridge links Cys320 with Cys346. 382-387 contributes to the substrate binding site; sequence VANYEY. Tyr385 (schiff-base intermediate with substrate; via topaquinone) is an active-site residue. Tyr385 is modified (2',4',5'-topaquinone). Cu cation is bound by residues His436 and His438. The Mn(2+) site is built by Asp445, Phe446, and Asp584. His595 provides a ligand contact to Cu cation. Residues 629 to 648 form a disordered region; sequence PTSTSTTQTGEADTCCHTDK.

It belongs to the copper/topaquinone oxidase family. In terms of assembly, homodimer. It depends on Cu cation as a cofactor. Zn(2+) is required as a cofactor. L-topaquinone serves as cofactor. Requires Mn(2+) as cofactor. Post-translationally, topaquinone (TPQ) is generated by copper-dependent autoxidation of a specific tyrosyl residue.

The enzyme catalyses a primary methyl amine + O2 + H2O = an aldehyde + H2O2 + NH4(+). This is Copper methylamine oxidase (maoII) from Arthrobacter sp. (strain P1).